Consider the following 438-residue polypeptide: Trigger factor (438 aa).

Residues 160–245 (DDKVTIDFVG…VKKIQQAELP (86 aa)) enclose the PPIase FKBP-type domain.

This sequence belongs to the FKBP-type PPIase family. Tig subfamily.

The protein resides in the cytoplasm. It catalyses the reaction [protein]-peptidylproline (omega=180) = [protein]-peptidylproline (omega=0). Functionally, involved in protein export. Acts as a chaperone by maintaining the newly synthesized protein in an open conformation. Functions as a peptidyl-prolyl cis-trans isomerase. The polypeptide is Trigger factor (Francisella tularensis subsp. holarctica (strain OSU18)).